A 332-amino-acid polypeptide reads, in one-letter code: L-lactate dehydrogenase A chain (332 aa).

An N-acetylalanine modification is found at Ala2. Position 5 is an N6-acetyllysine; alternate (Lys5). Lys5 carries the post-translational modification N6-succinyllysine; alternate. Lys14 is modified (N6-acetyllysine). 29–57 (GAVGMACAISILMKELADEIALVDVMEDK) contacts NAD(+). Lys57 bears the N6-acetyllysine; alternate mark. Lys57 is covalently cross-linked (Glycyl lysine isopeptide (Lys-Gly) (interchain with G-Cter in SUMO2); alternate). Lys81 is subject to N6-acetyllysine. Residue Arg99 participates in NAD(+) binding. Residue Arg106 coordinates substrate. An N6-acetyllysine; alternate modification is found at Lys118. Lys118 is modified (N6-succinyllysine; alternate). Lys126 is subject to N6-acetyllysine. Asn138 contributes to the NAD(+) binding site. Residues Asn138 and Arg169 each coordinate substrate. Catalysis depends on His193, which acts as the Proton acceptor. 2 positions are modified to N6-acetyllysine: Lys224 and Lys232. Tyr239 is subject to Phosphotyrosine. The residue at position 243 (Lys243) is an N6-acetyllysine. Thr248 contributes to the substrate binding site. Residue Thr309 is modified to Phosphothreonine. An N6-acetyllysine; alternate modification is found at Lys318. Position 318 is an N6-succinyllysine; alternate (Lys318). A Phosphothreonine modification is found at Thr322.

Belongs to the LDH/MDH superfamily. LDH family. In terms of assembly, homotetramer. Interacts with PTEN upstream reading frame protein MP31. ISGylated.

It is found in the cytoplasm. The catalysed reaction is (S)-lactate + NAD(+) = pyruvate + NADH + H(+). The protein operates within fermentation; pyruvate fermentation to lactate; (S)-lactate from pyruvate: step 1/1. Its function is as follows. Interconverts simultaneously and stereospecifically pyruvate and lactate with concomitant interconversion of NADH and NAD(+). This is L-lactate dehydrogenase A chain (LDHA) from Sus scrofa (Pig).